Consider the following 265-residue polypeptide: Apolipoprotein A-I (265 aa).

An N-terminal signal peptide occupies residues 1–18 (MKAVVLTLAVLFLTGSQA). 2 repeat units span residues 67–88 (LKLL…EQLG) and 89–110 (PVTQ…QEMS). Residues 67 to 265 (LKLLDNWDSL…DEASKKLNAQ (199 aa)) are 10 X approximate tandem repeats. Met109 bears the Methionine sulfoxide mark. Residues 111-121 (KDLEEVKKKVQ) form a 3; half-length repeat. Tandem repeats lie at residues 122-142 (PYLD…RQKM), 144-165 (PLGA…EKLS), 166-187 (PLAE…QHVA), 188-209 (PYSD…EGGG), and 210-230 (SLAE…EKAK). Met135 is modified (methionine sulfoxide). The stretch at 231-241 (PALEDLRQGLL) is one 9; half-length repeat. The stretch at 242–265 (PVLENLKVSILAAIDEASKKLNAQ) is repeat 10.

The protein belongs to the apolipoprotein A1/A4/E family. As to quaternary structure, homodimer. Interacts with APOA1BP and CLU. Component of a sperm activating protein complex (SPAP), consisting of APOA1, an immunoglobulin heavy chain, an immunoglobulin light chain and albumin. Interacts with NDRG1. Interacts with SCGB3A2. Interacts with NAXE and YJEFN3. In terms of processing, glycosylated. Post-translationally, palmitoylated. Phosphorylation sites are present in the extracellular medium. In terms of tissue distribution, major protein of plasma HDL, also found in chylomicrons. Synthesized predominantly in the intestine and the liver.

It is found in the secreted. Participates in the reverse transport of cholesterol from tissues to the liver for excretion by promoting cholesterol efflux from tissues and by acting as a cofactor for the lecithin cholesterol acyltransferase (LCAT). As part of the SPAP complex, activates spermatozoa motility. This is Apolipoprotein A-I (APOA1) from Sus scrofa (Pig).